We begin with the raw amino-acid sequence, 384 residues long: Galactokinase (384 aa).

Position 34-37 (Glu34–Asp37) interacts with substrate. Ser123–Ser129 is a binding site for ATP. Ser129 and Glu161 together coordinate Mg(2+). Residue Asp173 is the Proton acceptor of the active site. Tyr222 contacts substrate.

Belongs to the GHMP kinase family. GalK subfamily.

The protein localises to the cytoplasm. It catalyses the reaction alpha-D-galactose + ATP = alpha-D-galactose 1-phosphate + ADP + H(+). It participates in carbohydrate metabolism; galactose metabolism. Catalyzes the transfer of the gamma-phosphate of ATP to D-galactose to form alpha-D-galactose-1-phosphate (Gal-1-P). This Haemophilus influenzae (strain PittGG) protein is Galactokinase.